The sequence spans 133 residues: Small ribosomal subunit protein uS8 (133 aa).

It belongs to the universal ribosomal protein uS8 family. Part of the 30S ribosomal subunit. Contacts proteins S5 and S12.

Its function is as follows. One of the primary rRNA binding proteins, it binds directly to 16S rRNA central domain where it helps coordinate assembly of the platform of the 30S subunit. This chain is Small ribosomal subunit protein uS8, found in Chlamydia caviae (strain ATCC VR-813 / DSM 19441 / 03DC25 / GPIC) (Chlamydophila caviae).